A 358-amino-acid polypeptide reads, in one-letter code: Heme A synthase (358 aa).

Transmembrane regions (helical) follow at residues 22-42 (IQVWLYSILLLCLAIVLVGGA), 107-127 (ILGRLVGLLALLGLIWFWATK), 139-159 (IVPILIAFQGAIGWWMVASGI), 173-193 (AFHLITACFIITFVTYLSRGF), 208-228 (FAGWLVVLILIEIYFGALVAG), 269-289 (FIHRFFAYFLFFVTIIHAFYV), 302-322 (AFFICVMIVVQAFLGIITLLR), and 324-344 (VPIGLGLIHQSVALAILCFSV). H271 serves as a coordination point for heme. H332 contributes to the heme binding site.

The protein belongs to the COX15/CtaA family. Type 2 subfamily. Interacts with CtaB. It depends on heme b as a cofactor.

The protein resides in the cell membrane. The enzyme catalyses Fe(II)-heme o + 2 A + H2O = Fe(II)-heme a + 2 AH2. It functions in the pathway porphyrin-containing compound metabolism; heme A biosynthesis; heme A from heme O: step 1/1. Functionally, catalyzes the conversion of heme O to heme A by two successive hydroxylations of the methyl group at C8. The first hydroxylation forms heme I, the second hydroxylation results in an unstable dihydroxymethyl group, which spontaneously dehydrates, resulting in the formyl group of heme A. This chain is Heme A synthase, found in Bartonella quintana (strain Toulouse) (Rochalimaea quintana).